A 155-amino-acid chain; its full sequence is Small ribosomal subunit protein uS7cz/uS7cy (155 aa).

This sequence belongs to the universal ribosomal protein uS7 family. As to quaternary structure, part of the 30S ribosomal subunit.

It localises to the plastid. It is found in the chloroplast. Its function is as follows. One of the primary rRNA binding proteins, it binds directly to 16S rRNA where it nucleates assembly of the head domain of the 30S subunit. This is Small ribosomal subunit protein uS7cz/uS7cy (rps7-A) from Citrus sinensis (Sweet orange).